The sequence spans 368 residues: MMSEIKTNLLDLDRDAMRAFFVELGEKPFRADQIMKWIYHFGCDDFDQMNNVNKVLRERLKAIAEIRAPEVSREQRSSDGTIKWALQVGGQEVETVYIPEEDRATLCVSSQVGCALACKFCSTAQQGFNRNLKVSEIIGQVWRAAKIVGGKRPITNVVMMGMGEPLLNLANVIPAMRLMMDDFGYGISKRRVTISTSGVVPALDILGDQIDVALAISLHAPNDKLRSEIMPINDKYNIEDFLAGVRRYLAKSNANGGRVTVEYVLLDHINDDMQHAHELAKVLKDTPSKINLIPFNPFPGNPYGKPSNSRIDRFSKVLMEYGFTVIVRKTRGDDIDAACGQLVGEVIDRTKRTMKNRMQQDGISVKMV.

Glutamate 94 serves as the catalytic Proton acceptor. The 235-residue stretch at 100-334 folds into the Radical SAM core domain; that stretch reads EEDRATLCVS…VIVRKTRGDD (235 aa). Cysteine 107 and cysteine 339 are joined by a disulfide. Residues cysteine 114, cysteine 118, and cysteine 121 each contribute to the [4Fe-4S] cluster site. Residues 163-164, serine 195, 217-219, and asparagine 296 contribute to the S-adenosyl-L-methionine site; these read GE and SLH. Cysteine 339 (S-methylcysteine intermediate) is an active-site residue.

This sequence belongs to the radical SAM superfamily. RlmN family. The cofactor is [4Fe-4S] cluster.

The protein resides in the cytoplasm. The enzyme catalyses adenosine(2503) in 23S rRNA + 2 reduced [2Fe-2S]-[ferredoxin] + 2 S-adenosyl-L-methionine = 2-methyladenosine(2503) in 23S rRNA + 5'-deoxyadenosine + L-methionine + 2 oxidized [2Fe-2S]-[ferredoxin] + S-adenosyl-L-homocysteine. The catalysed reaction is adenosine(37) in tRNA + 2 reduced [2Fe-2S]-[ferredoxin] + 2 S-adenosyl-L-methionine = 2-methyladenosine(37) in tRNA + 5'-deoxyadenosine + L-methionine + 2 oxidized [2Fe-2S]-[ferredoxin] + S-adenosyl-L-homocysteine. In terms of biological role, specifically methylates position 2 of adenine 2503 in 23S rRNA and position 2 of adenine 37 in tRNAs. m2A2503 modification seems to play a crucial role in the proofreading step occurring at the peptidyl transferase center and thus would serve to optimize ribosomal fidelity. This is Dual-specificity RNA methyltransferase RlmN from Aeromonas salmonicida (strain A449).